Reading from the N-terminus, the 97-residue chain is Sperm-associated acrosin inhibitor (97 aa).

The N-terminal stretch at Met1–Phe26 is a signal peptide. Residues Thr32–Glu90 form the Kazal-like domain. Disulfide bonds link Cys38–Cys70, Cys48–Cys67, and Cys56–Cys88.

As to expression, seminal plasma.

Its subcellular location is the secreted. Functionally, inhibits acrosin. The polypeptide is Sperm-associated acrosin inhibitor (Sus scrofa (Pig)).